Reading from the N-terminus, the 209-residue chain is Thymidylate kinase (209 aa).

10–17 serves as a coordination point for ATP; it reads GLDGAGKS.

Belongs to the thymidylate kinase family.

It carries out the reaction dTMP + ATP = dTDP + ADP. Phosphorylation of dTMP to form dTDP in both de novo and salvage pathways of dTTP synthesis. In Francisella tularensis subsp. novicida (strain U112), this protein is Thymidylate kinase.